The following is a 93-amino-acid chain: Small ribosomal subunit protein uS19 (93 aa).

Belongs to the universal ribosomal protein uS19 family.

Functionally, protein S19 forms a complex with S13 that binds strongly to the 16S ribosomal RNA. In Campylobacter fetus subsp. fetus (strain 82-40), this protein is Small ribosomal subunit protein uS19.